A 2224-amino-acid chain; its full sequence is Protein sidekick (2224 aa).

The first 47 residues, 1-47, serve as a signal peptide directing secretion; that stretch reads MLKSAASSLRRRRPKTTITATLAIEMPSQPKLASLLAVLVLLCYCDS. Residues 48 to 2001 lie on the Extracellular side of the membrane; that stretch reads CFFCYADANL…LQHKPFYRQT (1954 aa). The Ig-like C2-type 1 domain occupies 72 to 155; the sequence is PRFTTHPSSS…SIFSEKSDVV (84 aa). Cysteines 95 and 138 form a disulfide. Residues asparagine 164, asparagine 250, asparagine 318, and asparagine 327 are each glycosylated (N-linked (GlcNAc...) asparagine). Ig-like C2-type domains are found at residues 261–355, 359–445, 455–541, and 546–636; these read PEII…ARLQ, PPLF…NSAS, PIME…AYLS, and TQII…ARLS. Intrachain disulfides connect cysteine 283–cysteine 336 and cysteine 382–cysteine 433. Asparagine 463, asparagine 485, and asparagine 491 each carry an N-linked (GlcNAc...) asparagine glycan. Disulfide bonds link cysteine 476-cysteine 525 and cysteine 567-cysteine 620. N-linked (GlcNAc...) asparagine glycosylation is found at asparagine 628, asparagine 661, asparagine 707, asparagine 809, asparagine 870, asparagine 942, asparagine 1019, asparagine 1094, asparagine 1109, asparagine 1172, asparagine 1203, asparagine 1282, asparagine 1329, asparagine 1379, asparagine 1414, and asparagine 1420. 13 consecutive Fibronectin type-III domains span residues 643 to 753, 758 to 855, 860 to 967, 971 to 1065, 1069 to 1164, 1169 to 1270, 1275 to 1372, 1376 to 1469, 1474 to 1570, 1575 to 1677, 1682 to 1785, 1789 to 1883, and 1885 to 1984; these read PPSN…LPQE, PPVG…TKEG, PPTN…TMDD, EVTG…VEPV, APTA…TIQA, PPFN…TREA, GPLD…TFED, VPSN…TNNR, APSV…TLPA, GVGG…VGEA, EPRA…TLPG, APLH…GPQD, and SPVA…TPSK. 2 N-linked (GlcNAc...) asparagine glycosylation sites follow: asparagine 1843 and asparagine 1876. Residues 2002-2022 form a helical membrane-spanning segment; sequence WFMVSLAATSIVIIVMVIAVL. Topologically, residues 2023–2224 are cytoplasmic; that stretch reads CVKSKSYKYK…APLPGFSSFV (202 aa). Disordered regions lie at residues 2068 to 2157 and 2171 to 2195; these read TLNS…RSDP and LRQS…PEGS. A Phosphoserine modification is found at serine 2071. Residues 2073 to 2085 are compositionally biased toward low complexity; it reads GTLRSGTLGTLGR. At threonine 2074 the chain carries Phosphothreonine. Composition is skewed to basic and acidic residues over residues 2112 to 2122 and 2144 to 2157; these read HSDEESLKCYD and QHSE…RSDP. Phosphoserine occurs at positions 2113 and 2117.

It belongs to the sidekick family.

The protein resides in the membrane. In terms of biological role, participates in homotypic or heterotypic interactions in the eye during pattern formation to prevent extra cells from joining the precluster and differentiating as photoreceptor cells. This is Protein sidekick from Drosophila melanogaster (Fruit fly).